The sequence spans 166 residues: Cytochrome c-type biogenesis protein CcmE (166 aa).

Residues 1-13 are Cytoplasmic-facing; sequence MNFLPKSRKARRR. A helical; Signal-anchor for type II membrane protein membrane pass occupies residues 14 to 34; that stretch reads LTILAVAAPVVALAVGLALWG. Residues 35–166 lie on the Periplasmic side of the membrane; sequence MRDAISLFYT…QGYKPGKPNT (132 aa). 2 residues coordinate heme: His128 and Tyr132. The disordered stretch occupies residues 143–166; that stretch reads EQGEWRGDGQAPSYQGYKPGKPNT.

Belongs to the CcmE/CycJ family.

The protein resides in the cell inner membrane. Its function is as follows. Heme chaperone required for the biogenesis of c-type cytochromes. Transiently binds heme delivered by CcmC and transfers the heme to apo-cytochromes in a process facilitated by CcmF and CcmH. This chain is Cytochrome c-type biogenesis protein CcmE, found in Caulobacter sp. (strain K31).